Consider the following 213-residue polypeptide: ATP phosphoribosyltransferase (213 aa).

Belongs to the ATP phosphoribosyltransferase family. Short subfamily. In terms of assembly, heteromultimer composed of HisG and HisZ subunits.

Its subcellular location is the cytoplasm. It catalyses the reaction 1-(5-phospho-beta-D-ribosyl)-ATP + diphosphate = 5-phospho-alpha-D-ribose 1-diphosphate + ATP. It functions in the pathway amino-acid biosynthesis; L-histidine biosynthesis; L-histidine from 5-phospho-alpha-D-ribose 1-diphosphate: step 1/9. Its function is as follows. Catalyzes the condensation of ATP and 5-phosphoribose 1-diphosphate to form N'-(5'-phosphoribosyl)-ATP (PR-ATP). Has a crucial role in the pathway because the rate of histidine biosynthesis seems to be controlled primarily by regulation of HisG enzymatic activity. This Nitrosococcus oceani (strain ATCC 19707 / BCRC 17464 / JCM 30415 / NCIMB 11848 / C-107) protein is ATP phosphoribosyltransferase.